Reading from the N-terminus, the 257-residue chain is Type III pantothenate kinase (257 aa).

Position 6–13 (6–13 (DCGNTNTV)) interacts with ATP. 107–110 (GPDR) is a substrate binding site. Asp-109 acts as the Proton acceptor in catalysis. Asp-129 contributes to the K(+) binding site. An ATP-binding site is contributed by Thr-132. Substrate is bound at residue Thr-184.

It belongs to the type III pantothenate kinase family. Homodimer. Requires NH4(+) as cofactor. The cofactor is K(+).

Its subcellular location is the cytoplasm. The catalysed reaction is (R)-pantothenate + ATP = (R)-4'-phosphopantothenate + ADP + H(+). It functions in the pathway cofactor biosynthesis; coenzyme A biosynthesis; CoA from (R)-pantothenate: step 1/5. Catalyzes the phosphorylation of pantothenate (Pan), the first step in CoA biosynthesis. This is Type III pantothenate kinase from Cereibacter sphaeroides (strain ATCC 17025 / ATH 2.4.3) (Rhodobacter sphaeroides).